The primary structure comprises 298 residues: Thymidylate synthase (298 aa).

DUMP is bound by residues R25 and 159-160 (RR). Catalysis depends on C179, which acts as the Nucleophile. DUMP is bound by residues 200-203 (RSCD), N211, and 241-243 (HLY). A (6R)-5,10-methylene-5,6,7,8-tetrahydrofolate-binding site is contributed by D203. Position 297 (A297) interacts with (6R)-5,10-methylene-5,6,7,8-tetrahydrofolate.

This sequence belongs to the thymidylate synthase family. Bacterial-type ThyA subfamily. Homodimer.

The protein resides in the cytoplasm. The enzyme catalyses dUMP + (6R)-5,10-methylene-5,6,7,8-tetrahydrofolate = 7,8-dihydrofolate + dTMP. The protein operates within pyrimidine metabolism; dTTP biosynthesis. Catalyzes the reductive methylation of 2'-deoxyuridine-5'-monophosphate (dUMP) to 2'-deoxythymidine-5'-monophosphate (dTMP) while utilizing 5,10-methylenetetrahydrofolate (mTHF) as the methyl donor and reductant in the reaction, yielding dihydrofolate (DHF) as a by-product. This enzymatic reaction provides an intracellular de novo source of dTMP, an essential precursor for DNA biosynthesis. This chain is Thymidylate synthase, found in Rhodopseudomonas palustris (strain BisA53).